Reading from the N-terminus, the 321-residue chain is Cytochrome c biogenesis protein CcsA (321 aa).

Transmembrane regions (helical) follow at residues 1–21, 36–56, 70–90, 97–117, 143–163, 229–249, 256–276, and 290–310; these read MIFI…ISVV, LSSS…GLLI, LYES…ILEV, GLGA…TSGL, ILLS…FLII, VIGL…VWAN, WSWD…AIYL, and AIIA…VDLL.

The protein belongs to the CcmF/CycK/Ccl1/NrfE/CcsA family. In terms of assembly, may interact with Ccs1.

Its subcellular location is the plastid. The protein resides in the chloroplast thylakoid membrane. Its function is as follows. Required during biogenesis of c-type cytochromes (cytochrome c6 and cytochrome f) at the step of heme attachment. In Cycas taitungensis (Prince sago), this protein is Cytochrome c biogenesis protein CcsA.